A 533-amino-acid chain; its full sequence is Glucose-6-phosphate isomerase (533 aa).

Glutamate 341 functions as the Proton donor in the catalytic mechanism. Catalysis depends on residues histidine 372 and lysine 501.

Belongs to the GPI family.

It is found in the cytoplasm. The catalysed reaction is alpha-D-glucose 6-phosphate = beta-D-fructose 6-phosphate. The protein operates within carbohydrate biosynthesis; gluconeogenesis. Its pathway is carbohydrate degradation; glycolysis; D-glyceraldehyde 3-phosphate and glycerone phosphate from D-glucose: step 2/4. Catalyzes the reversible isomerization of glucose-6-phosphate to fructose-6-phosphate. The sequence is that of Glucose-6-phosphate isomerase from Cereibacter sphaeroides (strain ATCC 17025 / ATH 2.4.3) (Rhodobacter sphaeroides).